Reading from the N-terminus, the 128-residue chain is Keratin-associated protein 2-3 (128 aa).

Residues 5–112 (CCGSTLSSLS…SVQSPCCRPP (108 aa)) are 10 X 5 AA repeats of C-C-[CDPQRWG]-[APRS]-[CIPSTVD].

It belongs to the KRTAP type 2 family. In terms of assembly, interacts with hair keratins.

Its function is as follows. In the hair cortex, hair keratin intermediate filaments are embedded in an interfilamentous matrix, consisting of hair keratin-associated proteins (KRTAP), which are essential for the formation of a rigid and resistant hair shaft through their extensive disulfide bond cross-linking with abundant cysteine residues of hair keratins. The matrix proteins include the high-sulfur and high-glycine-tyrosine keratins. This Homo sapiens (Human) protein is Keratin-associated protein 2-3 (KRTAP2-3).